We begin with the raw amino-acid sequence, 236 residues long: Small ribosomal subunit protein uS2c (236 aa).

It belongs to the universal ribosomal protein uS2 family.

It localises to the plastid. It is found in the chloroplast. This is Small ribosomal subunit protein uS2c (rps2) from Coffea arabica (Arabian coffee).